Here is a 545-residue protein sequence, read N- to C-terminus: CTP synthase (545 aa).

Residues methionine 1–leucine 266 form an amidoligase domain region. Serine 14 provides a ligand contact to CTP. UTP is bound at residue serine 14. ATP is bound by residues serine 15 to isoleucine 20 and aspartate 72. Residues aspartate 72 and glutamate 140 each contribute to the Mg(2+) site. CTP-binding positions include aspartate 147–glutamate 149, lysine 187–glutamine 192, and lysine 223. Residues lysine 187 to glutamine 192 and lysine 223 contribute to the UTP site. Lysine 239–valine 241 serves as a coordination point for ATP. The Glutamine amidotransferase type-1 domain occupies threonine 291–lysine 542. Glycine 352 is an L-glutamine binding site. Catalysis depends on cysteine 379, which acts as the Nucleophile; for glutamine hydrolysis. Residues leucine 380–glutamine 383, glutamate 403, and arginine 470 each bind L-glutamine. Catalysis depends on residues histidine 515 and glutamate 517.

It belongs to the CTP synthase family. In terms of assembly, homotetramer.

It carries out the reaction UTP + L-glutamine + ATP + H2O = CTP + L-glutamate + ADP + phosphate + 2 H(+). It catalyses the reaction L-glutamine + H2O = L-glutamate + NH4(+). The catalysed reaction is UTP + NH4(+) + ATP = CTP + ADP + phosphate + 2 H(+). Its pathway is pyrimidine metabolism; CTP biosynthesis via de novo pathway; CTP from UDP: step 2/2. Allosterically activated by GTP, when glutamine is the substrate; GTP has no effect on the reaction when ammonia is the substrate. The allosteric effector GTP functions by stabilizing the protein conformation that binds the tetrahedral intermediate(s) formed during glutamine hydrolysis. Inhibited by the product CTP, via allosteric rather than competitive inhibition. Catalyzes the ATP-dependent amination of UTP to CTP with either L-glutamine or ammonia as the source of nitrogen. Regulates intracellular CTP levels through interactions with the four ribonucleotide triphosphates. This is CTP synthase from Haemophilus influenzae (strain ATCC 51907 / DSM 11121 / KW20 / Rd).